A 110-amino-acid chain; its full sequence is Ribonuclease P protein component (110 aa).

This sequence belongs to the RnpA family. As to quaternary structure, consists of a catalytic RNA component (M1 or rnpB) and a protein subunit.

It catalyses the reaction Endonucleolytic cleavage of RNA, removing 5'-extranucleotides from tRNA precursor.. In terms of biological role, RNaseP catalyzes the removal of the 5'-leader sequence from pre-tRNA to produce the mature 5'-terminus. It can also cleave other RNA substrates such as 4.5S RNA. The protein component plays an auxiliary but essential role in vivo by binding to the 5'-leader sequence and broadening the substrate specificity of the ribozyme. In Mesorhizobium japonicum (strain LMG 29417 / CECT 9101 / MAFF 303099) (Mesorhizobium loti (strain MAFF 303099)), this protein is Ribonuclease P protein component.